The primary structure comprises 100 residues: Large ribosomal subunit protein uL23 (100 aa).

Belongs to the universal ribosomal protein uL23 family. In terms of assembly, part of the 50S ribosomal subunit. Contacts protein L29, and trigger factor when it is bound to the ribosome.

Functionally, one of the early assembly proteins it binds 23S rRNA. One of the proteins that surrounds the polypeptide exit tunnel on the outside of the ribosome. Forms the main docking site for trigger factor binding to the ribosome. In Mycolicibacterium vanbaalenii (strain DSM 7251 / JCM 13017 / BCRC 16820 / KCTC 9966 / NRRL B-24157 / PYR-1) (Mycobacterium vanbaalenii), this protein is Large ribosomal subunit protein uL23.